Here is a 939-residue protein sequence, read N- to C-terminus: Probable importin ECU10_0620 (939 aa).

One can recognise an Importin N-terminal domain in the interval 23-90 (AEAMLMDLEK…VENILDLFLY (68 aa)).

This sequence belongs to the importin beta family.

It is found in the nucleus. The protein localises to the cytoplasm. Its function is as follows. Active in protein import into the nucleus. The protein is Probable importin ECU10_0620 of Encephalitozoon cuniculi (strain GB-M1) (Microsporidian parasite).